A 932-amino-acid chain; its full sequence is MYCBP-associated protein (932 aa).

2 disordered regions span residues 1-39 (MMKK…PVSN) and 165-187 (EEPK…PPQH). The segment covering 165 to 178 (EEPKPKPPKEEERP) has biased composition (basic and acidic residues). Ser-559 carries the phosphoserine modification. Thr-560 carries the phosphothreonine modification. A Phosphoserine modification is found at Ser-566. The disordered stretch occupies residues 789-886 (LPDEQGQKSP…TAPSQEPIDP (98 aa)). Positions 795–806 (QKSPPVTESKVT) are enriched in polar residues. Residues 810–869 (AGKEDRRGGAQEKKQLGTKDKDDKRGSKTPGKEDRPNSKKLKPKDDKKVVKSASRDRLLS) are compositionally biased toward basic and acidic residues.

Interacts with MYCBP.

The protein localises to the cytoplasm. It localises to the membrane. May play a role in spermatogenesis. May be involved in synaptic processes. The polypeptide is MYCBP-associated protein (Mus musculus (Mouse)).